Here is a 372-residue protein sequence, read N- to C-terminus: Queuine tRNA-ribosyltransferase (372 aa).

Asp-89 (proton acceptor) is an active-site residue. Substrate is bound by residues 89–93 (DSGGF), Asp-161, and Gly-232. The segment at 262-268 (GIGDLPS) is RNA binding. Asp-281 serves as the catalytic Nucleophile. The RNA binding; important for wobble base 34 recognition stretch occupies residues 286–290 (TKAAR). Residues Cys-319, Cys-321, Cys-324, and His-351 each coordinate Zn(2+).

Belongs to the queuine tRNA-ribosyltransferase family. Homodimer. Within each dimer, one monomer is responsible for RNA recognition and catalysis, while the other monomer binds to the replacement base PreQ1. Requires Zn(2+) as cofactor.

It catalyses the reaction 7-aminomethyl-7-carbaguanine + guanosine(34) in tRNA = 7-aminomethyl-7-carbaguanosine(34) in tRNA + guanine. Its pathway is tRNA modification; tRNA-queuosine biosynthesis. Its function is as follows. Catalyzes the base-exchange of a guanine (G) residue with the queuine precursor 7-aminomethyl-7-deazaguanine (PreQ1) at position 34 (anticodon wobble position) in tRNAs with GU(N) anticodons (tRNA-Asp, -Asn, -His and -Tyr). Catalysis occurs through a double-displacement mechanism. The nucleophile active site attacks the C1' of nucleotide 34 to detach the guanine base from the RNA, forming a covalent enzyme-RNA intermediate. The proton acceptor active site deprotonates the incoming PreQ1, allowing a nucleophilic attack on the C1' of the ribose to form the product. After dissociation, two additional enzymatic reactions on the tRNA convert PreQ1 to queuine (Q), resulting in the hypermodified nucleoside queuosine (7-(((4,5-cis-dihydroxy-2-cyclopenten-1-yl)amino)methyl)-7-deazaguanosine). The polypeptide is Queuine tRNA-ribosyltransferase (Chlamydia trachomatis serovar A (strain ATCC VR-571B / DSM 19440 / HAR-13)).